An 80-amino-acid chain; its full sequence is Exodeoxyribonuclease 7 small subunit (80 aa).

This sequence belongs to the XseB family. In terms of assembly, heterooligomer composed of large and small subunits.

It is found in the cytoplasm. It catalyses the reaction Exonucleolytic cleavage in either 5'- to 3'- or 3'- to 5'-direction to yield nucleoside 5'-phosphates.. Its function is as follows. Bidirectionally degrades single-stranded DNA into large acid-insoluble oligonucleotides, which are then degraded further into small acid-soluble oligonucleotides. The sequence is that of Exodeoxyribonuclease 7 small subunit from Rickettsia bellii (strain OSU 85-389).